A 216-amino-acid chain; its full sequence is Large ribosomal subunit protein eL15 (216 aa).

It belongs to the eukaryotic ribosomal protein eL15 family.

This is Large ribosomal subunit protein eL15 from Metallosphaera sedula (strain ATCC 51363 / DSM 5348 / JCM 9185 / NBRC 15509 / TH2).